The following is a 276-amino-acid chain: uncharacterized protein (276 aa).

The AB hydrolase-1 domain maps to 20–137; it reads PVLIFIPGAN…PPINTFLPDS (118 aa). Residues 57–76 are disordered; it reads GESELTEPLPDSASNPDSDY.

This sequence belongs to the AB hydrolase superfamily.

This is an uncharacterized protein from Staphylococcus aureus (strain MW2).